The primary structure comprises 379 residues: Alcohol dehydrogenase 1 (379 aa).

8 residues coordinate Zn(2+): Cys47, Thr49, His69, Cys99, Cys102, Cys105, Cys113, and Cys177. Positions 49 and 69 each coordinate an alcohol. Thr49 is an NAD(+) binding site. NAD(+) is bound by residues 202 to 207 (GLGAVG), Asp226, Arg231, Thr272, Val295, 295 to 297 (VGV), Phe322, and Arg372.

Belongs to the zinc-containing alcohol dehydrogenase family. In terms of assembly, homodimer. The cofactor is Zn(2+).

Its subcellular location is the cytoplasm. It catalyses the reaction a primary alcohol + NAD(+) = an aldehyde + NADH + H(+). The enzyme catalyses a secondary alcohol + NAD(+) = a ketone + NADH + H(+). The chain is Alcohol dehydrogenase 1 (ADH1) from Hordeum vulgare (Barley).